The primary structure comprises 250 residues: MTKTPAKKKRARSSKAKGTDANAALEARIGHSFADPNLLMQGITHVSALKSGRKRGDSYQRLEFLGDHVLGLVVSDMLYHAFPNADEGELSKRLAELVRKESCADVAKSLGLLDDIKLGSVGPSADARLRKSVLGDICEAVIGAIFLDGGHAAAAEFVKRNWTERMHKPRRPLRDPKTVLQEWAQGKGLPTPVYREVERTGPHHDPQFRVAVDLPGLAPAEGIGGSKRAAEKVAASVMIEREGVGGGNDG.

Basic residues predominate over residues 1-15; that stretch reads MTKTPAKKKRARSSK. The interval 1-21 is disordered; that stretch reads MTKTPAKKKRARSSKAKGTDA. One can recognise an RNase III domain in the interval 22-150; that stretch reads NAALEARIGH…VIGAIFLDGG (129 aa). Glutamate 63 contributes to the Mg(2+) binding site. Aspartate 67 is a catalytic residue. Positions 136 and 139 each coordinate Mg(2+). Glutamate 139 is a catalytic residue. The DRBM domain maps to 175–244; it reads DPKTVLQEWA…ASVMIEREGV (70 aa).

It belongs to the ribonuclease III family. In terms of assembly, homodimer. It depends on Mg(2+) as a cofactor.

It is found in the cytoplasm. The catalysed reaction is Endonucleolytic cleavage to 5'-phosphomonoester.. Its function is as follows. Digests double-stranded RNA. Involved in the processing of primary rRNA transcript to yield the immediate precursors to the large and small rRNAs (23S and 16S). Processes some mRNAs, and tRNAs when they are encoded in the rRNA operon. Processes pre-crRNA and tracrRNA of type II CRISPR loci if present in the organism. This chain is Ribonuclease 3, found in Bradyrhizobium diazoefficiens (strain JCM 10833 / BCRC 13528 / IAM 13628 / NBRC 14792 / USDA 110).